Reading from the N-terminus, the 374-residue chain is Serine/threonine-protein kinase-transforming protein mos (374 aa).

Residues 94–370 form the Protein kinase domain; sequence VCLMHRLGSG…LLQRDLKAFR (277 aa). ATP-binding positions include 100–108 and lysine 121; that span reads LGSGGFGSV. Aspartate 229 acts as the Proton acceptor in catalysis.

Belongs to the protein kinase superfamily. Ser/Thr protein kinase family.

It catalyses the reaction L-seryl-[protein] + ATP = O-phospho-L-seryl-[protein] + ADP + H(+). The catalysed reaction is L-threonyl-[protein] + ATP = O-phospho-L-threonyl-[protein] + ADP + H(+). This chain is Serine/threonine-protein kinase-transforming protein mos (V-MOS), found in Mus musculus (Mouse).